The chain runs to 172 residues: Putative phosphoesterase BCG9842_B4061 (172 aa).

His34 (proton donor) is an active-site residue. 2 short sequence motifs (HXTX) span residues 34 to 37 (HITL) and 115 to 118 (HLTI). His115 functions as the Proton acceptor in the catalytic mechanism.

This sequence belongs to the 2H phosphoesterase superfamily. YjcG family.

This chain is Putative phosphoesterase BCG9842_B4061, found in Bacillus cereus (strain G9842).